The sequence spans 273 residues: MATTGEALNASEYIQHHLTNAKMCSTDGGVAFNHACQDAGFWTWHIDSLLFSVGLGVLFLWLFYKTGQKATAGVPGKLQCFVEMCVEGVDKIAKESFHGKNVVIAPLALTIFIWVFLMNFMDLIPVDFIPEAANRFLGVPYLKVVPTTDLNVTLGLSLSVFVLIVFYSIKAKGIGGFTKELTLQPFNHWSLIPVNFILESVTLIAKPISLALRLFGNLYAGELIFILIALMPWWAQFALSVPWAIFHILIIVLQAFIFMMLTIVYLSMAHEEH.

5 helical membrane passes run 44–64 (WHID…WLFY), 104–124 (IAPL…MDLI), 149–169 (DLNV…FYSI), 223–243 (LIFI…SVPW), and 244–264 (AIFH…LTIV).

Belongs to the ATPase A chain family. F-type ATPases have 2 components, CF(1) - the catalytic core - and CF(0) - the membrane proton channel. CF(1) has five subunits: alpha(3), beta(3), gamma(1), delta(1), epsilon(1). CF(0) has three main subunits: a(1), b(2) and c(9-12). The alpha and beta chains form an alternating ring which encloses part of the gamma chain. CF(1) is attached to CF(0) by a central stalk formed by the gamma and epsilon chains, while a peripheral stalk is formed by the delta and b chains.

Its subcellular location is the cell inner membrane. Key component of the proton channel; it plays a direct role in the translocation of protons across the membrane. This is ATP synthase subunit a from Shewanella putrefaciens (strain CN-32 / ATCC BAA-453).